Reading from the N-terminus, the 412-residue chain is F-box/WD repeat-containing protein 4 (412 aa).

An F-box domain is found at 25 to 71 (GPALWRLPEELLLLICSYLDMRALGRLAQVCRWLRRFTSCDLLWRRI). WD repeat units follow at residues 154 to 190 (RPLGVFAGHDEDVCHFVLANSHIVSAGGDGKIGIHKI), 193 to 229 (TFTVKYSAHEQEVNCVDCKGGIIVSGSRDRTAKVWPL), 236 to 277 (QCLH…IWDL), 283 to 321 (MTHLGSDFPPGAGVLDVMYESPFTLLSCGYDTYVRYWDL), 327 to 366 (KCVMEWEEPHDSTLYCLQTDGNHLLATGSSYYGVVRLWDR), and 373 to 409 (HAFPLTSTPLSSPVYCLRLTTKHLYAALSYNLHVLDF).

In terms of assembly, part of a SCF (SKP1-cullin-F-box) protein ligase complex. Interacts with POUF51. In terms of tissue distribution, expressed in brain, kidney, lung and liver.

In terms of biological role, probably recognizes and binds to some phosphorylated proteins and promotes their ubiquitination and degradation. Likely to be involved in key signaling pathways crucial for normal limb development. May participate in Wnt signaling. This is F-box/WD repeat-containing protein 4 (FBXW4) from Homo sapiens (Human).